The sequence spans 114 residues: Large ribosomal subunit protein bL20c (114 aa).

The protein belongs to the bacterial ribosomal protein bL20 family.

The protein resides in the plastid. It is found in the chloroplast. Its function is as follows. Binds directly to 23S ribosomal RNA and is necessary for the in vitro assembly process of the 50S ribosomal subunit. It is not involved in the protein synthesizing functions of that subunit. The protein is Large ribosomal subunit protein bL20c (rpl20) of Guillardia theta (Cryptophyte).